We begin with the raw amino-acid sequence, 311 residues long: tRNA dimethylallyltransferase (311 aa).

9 to 16 (GPTAVGKT) contacts ATP. 11–16 (TAVGKT) serves as a coordination point for substrate. An interaction with substrate tRNA region spans residues 34–37 (DSMQ).

This sequence belongs to the IPP transferase family. As to quaternary structure, monomer. The cofactor is Mg(2+).

The enzyme catalyses adenosine(37) in tRNA + dimethylallyl diphosphate = N(6)-dimethylallyladenosine(37) in tRNA + diphosphate. Catalyzes the transfer of a dimethylallyl group onto the adenine at position 37 in tRNAs that read codons beginning with uridine, leading to the formation of N6-(dimethylallyl)adenosine (i(6)A). This Clostridium botulinum (strain Hall / ATCC 3502 / NCTC 13319 / Type A) protein is tRNA dimethylallyltransferase.